The primary structure comprises 64 residues: MAKAAKTIKVEQTRSAIRRQHSQRSTLVGLKLNKIGRVAELQDTPETRGMIAKVQHLVRVIDET.

The disordered stretch occupies residues 1-22; it reads MAKAAKTIKVEQTRSAIRRQHS.

It belongs to the universal ribosomal protein uL30 family. As to quaternary structure, part of the 50S ribosomal subunit.

This Nitrobacter hamburgensis (strain DSM 10229 / NCIMB 13809 / X14) protein is Large ribosomal subunit protein uL30.